Here is a 185-residue protein sequence, read N- to C-terminus: Pycsar effector protein EcPycTM (185 aa).

The next 3 helical transmembrane spans lie at 32 to 52 (ALLLAVNGATATILSNKVGYF), 63 to 83 (MVIFFLLLFMISIFIFMSVLL), and 141 to 161 (FILSCIAKQKFLFFSSAVSWI).

Its subcellular location is the cell inner membrane. Functionally, pycsar (pyrimidine cyclase system for antiphage resistance) provides immunity against bacteriophage. The pyrimidine cyclase (PycC) synthesizes cyclic nucleotides in response to infection; these serve as specific second messenger signals. The signals activate the adjacent effector, leading to bacterial cell death and abortive phage infection. A clade E Pycsar system. In terms of biological role, the effector component of a two-gene Pycsar system. Expression of this and adjacent cytidylate cyclase EcPycC (AC P0DV24) confers resistance to bacteriophage P1 and T5; this protein is required for resistance. When cells expressing the Pycsar system are infected by phage T5 at low multiplicity of infection (0.2 MOI) the culture survives, at 2.0 MOI bacteria enter growth arrest. The same cells enter growth arrest after exposure to 250 uM cCMP but not cUMP; this effector protein responds only to cCMP, usually produced by its cognate NTP cyclase. Some of the cells treated with cCMP have abnormal membrane protrusions, probably due to effects on membrane integrity. In Escherichia coli, this protein is Pycsar effector protein EcPycTM.